The chain runs to 222 residues: Urease accessory protein UreF (222 aa).

Belongs to the UreF family. As to quaternary structure, ureD, UreF and UreG form a complex that acts as a GTP-hydrolysis-dependent molecular chaperone, activating the urease apoprotein by helping to assemble the nickel containing metallocenter of UreC. The UreE protein probably delivers the nickel.

It localises to the cytoplasm. Functionally, required for maturation of urease via the functional incorporation of the urease nickel metallocenter. The chain is Urease accessory protein UreF from Roseobacter denitrificans (strain ATCC 33942 / OCh 114) (Erythrobacter sp. (strain OCh 114)).